We begin with the raw amino-acid sequence, 312 residues long: Acetyl-coenzyme A carboxylase carboxyl transferase subunit alpha (312 aa).

Positions 36–286 (NLEKEISKTY…ADYVKKSLNE (251 aa)) constitute a CoA carboxyltransferase C-terminal domain.

The protein belongs to the AccA family. As to quaternary structure, acetyl-CoA carboxylase is a heterohexamer composed of biotin carboxyl carrier protein (AccB), biotin carboxylase (AccC) and two subunits each of ACCase subunit alpha (AccA) and ACCase subunit beta (AccD).

Its subcellular location is the cytoplasm. It catalyses the reaction N(6)-carboxybiotinyl-L-lysyl-[protein] + acetyl-CoA = N(6)-biotinyl-L-lysyl-[protein] + malonyl-CoA. Its pathway is lipid metabolism; malonyl-CoA biosynthesis; malonyl-CoA from acetyl-CoA: step 1/1. Its function is as follows. Component of the acetyl coenzyme A carboxylase (ACC) complex. First, biotin carboxylase catalyzes the carboxylation of biotin on its carrier protein (BCCP) and then the CO(2) group is transferred by the carboxyltransferase to acetyl-CoA to form malonyl-CoA. The chain is Acetyl-coenzyme A carboxylase carboxyl transferase subunit alpha from Campylobacter jejuni subsp. jejuni serotype O:6 (strain 81116 / NCTC 11828).